We begin with the raw amino-acid sequence, 76 residues long: uncharacterized protein (76 aa).

2 EF-hand domains span residues 9-44 (EMDEEAEEAFDLFDVTHKGYIDFEDLRRSCAQLGEN) and 43-76 (ENLTKEQLQLMLDLAGTNGKVSREEFAELWIHIS).

The protein resides in the cytoplasm. It is found in the nucleus. This is an uncharacterized protein from Schizosaccharomyces pombe (strain 972 / ATCC 24843) (Fission yeast).